We begin with the raw amino-acid sequence, 104 residues long: uncharacterized protein (104 aa).

A helical membrane pass occupies residues 81–97 (CLLMLPCISVVMSISSV).

The protein localises to the cell membrane. This is an uncharacterized protein from Bacillus subtilis (strain 168).